The following is a 372-amino-acid chain: Glutamate 5-kinase (372 aa).

Lys14 serves as a coordination point for ATP. The substrate site is built by Ser54, Asp141, and Asn153. Residues 173–174 (TD) and 215–221 (TGGMATK) contribute to the ATP site. The 79-residue stretch at 280 to 358 (RGQLVIDAGA…DSIEEVLGYD (79 aa)) folds into the PUA domain.

Belongs to the glutamate 5-kinase family.

The protein localises to the cytoplasm. It carries out the reaction L-glutamate + ATP = L-glutamyl 5-phosphate + ADP. It functions in the pathway amino-acid biosynthesis; L-proline biosynthesis; L-glutamate 5-semialdehyde from L-glutamate: step 1/2. Functionally, catalyzes the transfer of a phosphate group to glutamate to form L-glutamate 5-phosphate. In Shewanella pealeana (strain ATCC 700345 / ANG-SQ1), this protein is Glutamate 5-kinase.